Here is a 182-residue protein sequence, read N- to C-terminus: MELAEIEELMNKAVQATQRSFNTVRTGRANSSLLDRIQVEYYGVPTPLKALASLTTPDSSTLLIQPFDPSTLAAIERAIVASDLGLTPSNDGKVVRLTIPPLTEERRKELSKQVAKLAEEGRVSIRNIRRDGIDSVRKREKNGELSEDESKSLQDDIQKLTDRYIKKIDELLAEKEKELTTL.

The protein belongs to the RRF family.

Its subcellular location is the cytoplasm. Its function is as follows. Responsible for the release of ribosomes from messenger RNA at the termination of protein biosynthesis. May increase the efficiency of translation by recycling ribosomes from one round of translation to another. This Synechococcus sp. (strain JA-2-3B'a(2-13)) (Cyanobacteria bacterium Yellowstone B-Prime) protein is Ribosome-recycling factor.